The following is a 180-amino-acid chain: NAD(P)H-quinone oxidoreductase subunit I, chloroplastic (180 aa).

2 4Fe-4S ferredoxin-type domains span residues 55–84 (GRIH…VDWR) and 95–124 (LNYS…MTEE). [4Fe-4S] cluster is bound by residues Cys64, Cys67, Cys70, Cys74, Cys104, Cys107, Cys110, and Cys114.

Belongs to the complex I 23 kDa subunit family. As to quaternary structure, NDH is composed of at least 16 different subunits, 5 of which are encoded in the nucleus. Requires [4Fe-4S] cluster as cofactor.

Its subcellular location is the plastid. It is found in the chloroplast thylakoid membrane. The catalysed reaction is a plastoquinone + NADH + (n+1) H(+)(in) = a plastoquinol + NAD(+) + n H(+)(out). It carries out the reaction a plastoquinone + NADPH + (n+1) H(+)(in) = a plastoquinol + NADP(+) + n H(+)(out). In terms of biological role, NDH shuttles electrons from NAD(P)H:plastoquinone, via FMN and iron-sulfur (Fe-S) centers, to quinones in the photosynthetic chain and possibly in a chloroplast respiratory chain. The immediate electron acceptor for the enzyme in this species is believed to be plastoquinone. Couples the redox reaction to proton translocation, and thus conserves the redox energy in a proton gradient. This Zea mays (Maize) protein is NAD(P)H-quinone oxidoreductase subunit I, chloroplastic.